The sequence spans 454 residues: Chromosomal replication initiator protein DnaA (454 aa).

Residues 1–77 form a domain I, interacts with DnaA modulators region; that stretch reads MASLNENQKF…GFEVFGRMID (77 aa). The domain II stretch occupies residues 77-115; sequence DYELYANDELTDIELRRLNNQSPVDEPLSVAKPTSPLVS. The interval 116–332 is domain III, AAA+ region; that stretch reads GLNEKYNFEN…GALNRVEFVA (217 aa). Positions 160, 162, 163, and 164 each coordinate ATP. Residues 333-454 are domain IV, binds dsDNA; that stretch reads RANGISIVDI…KDIDSIKRKF (122 aa).

It belongs to the DnaA family. Oligomerizes as a right-handed, spiral filament on DNA at oriC.

The protein resides in the cytoplasm. Its function is as follows. Plays an essential role in the initiation and regulation of chromosomal replication. ATP-DnaA binds to the origin of replication (oriC) to initiate formation of the DNA replication initiation complex once per cell cycle. Binds the DnaA box (a 9 base pair repeat at the origin) and separates the double-stranded (ds)DNA. Forms a right-handed helical filament on oriC DNA; dsDNA binds to the exterior of the filament while single-stranded (ss)DNA is stabiized in the filament's interior. The ATP-DnaA-oriC complex binds and stabilizes one strand of the AT-rich DNA unwinding element (DUE), permitting loading of DNA polymerase. After initiation quickly degrades to an ADP-DnaA complex that is not apt for DNA replication. Binds acidic phospholipids. In Lactococcus lactis subsp. cremoris (strain MG1363), this protein is Chromosomal replication initiator protein DnaA.